The chain runs to 65 residues: Large ribosomal subunit protein bL35 (65 aa).

Belongs to the bacterial ribosomal protein bL35 family.

This is Large ribosomal subunit protein bL35 from Erwinia tasmaniensis (strain DSM 17950 / CFBP 7177 / CIP 109463 / NCPPB 4357 / Et1/99).